Here is a 733-residue protein sequence, read N- to C-terminus: MVRYMVTSALPYANGPIHAGHLAGAYLPADIFVRYLRLKGEEVIFISGTDEHGTPITFRALKEGKSPREIVDYYHEHIKTTFERAKISFDYFGRTELPVHYRISQDFFLKALENDHLIKKVSKQAYCEHDKMFLPDRYVIGTCPYCGAENQRGDQCEVCGHPLTPEELINPRCNICGNPITFRDSAHYYIKMQDFAEKLKEWVQSQEHWKPNVKNTVLGWIEEGLEERAITRDLNWGIPVPLDDEDVKGKVLYVWFEAPIGYISITVEHLKREGKENEWKKFWLNLDGGTKVIHFIGKDNIPFHAIFWPAFLMAYGKYKEEETEAEWLLPYDIPANEYLNLEGKKFSTSRNWAIWVHEFLDAFPADYLRYYLTAIMPETRDSDFSFADFKTKINEELVNNLGNFVHRALTFVNRYFDGVVPERGELDDLDRQAFEEIEKALKETGELISTYRFKDALRRVMELAIFGNRYFDYQKPWKTAKENRERTATTVNVSLQIVKVLGVLLEPFLPDASEKIWHLLNLEETKRWEFIEIPAGHRVRRAEILFRKVTDEDIIFFIVNYIARGNPESARLLLDKYYRTDDVVKVALERFGEKRKDEAMAILKSIYGERLEKKAKKEKKKEGGKVEYVKFEDFMKLDLRVGKIVDVQDHPNADKLYVVKVDLGNEVRQLVAGLKKYYSKDDLLNRYVVIIANLEPKKLRGIESQGMLLAADDGENVALLMPDKEVKLGARIR.

The 'HIGH' region motif lies at 11–21 (PYANGPIHAGH). Zn(2+) contacts are provided by C143, C146, C156, and C159. The 'KMSKS' region motif lies at 345–349 (KFSTS). An ATP-binding site is contributed by T348. The tRNA-binding domain maps to 633–733 (DFMKLDLRVG…KEVKLGARIR (101 aa)).

This sequence belongs to the class-I aminoacyl-tRNA synthetase family. MetG type 1 subfamily. In terms of assembly, homodimer. The cofactor is Zn(2+).

It localises to the cytoplasm. It carries out the reaction tRNA(Met) + L-methionine + ATP = L-methionyl-tRNA(Met) + AMP + diphosphate. Its function is as follows. Is required not only for elongation of protein synthesis but also for the initiation of all mRNA translation through initiator tRNA(fMet) aminoacylation. In Thermococcus onnurineus (strain NA1), this protein is Methionine--tRNA ligase.